The primary structure comprises 441 residues: GTPase Der (441 aa).

2 consecutive EngA-type G domains span residues 4 to 169 (PVVA…PDSS) and 178 to 353 (PRVA…ENNS). GTP contacts are provided by residues 10 to 17 (GRPNVGKS), 57 to 61 (DTGGI), 120 to 123 (NKVD), 184 to 191 (GKPNVGKS), 231 to 235 (DTAGL), and 296 to 299 (NKWD). The 85-residue stretch at 354–438 (MRVATGVLNE…ALKFITRERK (85 aa)) folds into the KH-like domain.

Belongs to the TRAFAC class TrmE-Era-EngA-EngB-Septin-like GTPase superfamily. EngA (Der) GTPase family. In terms of assembly, associates with the 50S ribosomal subunit.

Its function is as follows. GTPase that plays an essential role in the late steps of ribosome biogenesis. The polypeptide is GTPase Der (Agathobacter rectalis (strain ATCC 33656 / DSM 3377 / JCM 17463 / KCTC 5835 / VPI 0990) (Eubacterium rectale)).